A 387-amino-acid polypeptide reads, in one-letter code: Probable aminomethyltransferase, mitochondrial (387 aa).

Substrate is bound by residues E219, R248, and Y385.

The protein belongs to the GcvT family. The glycine cleavage system is composed of four proteins: P, T, L and H.

It localises to the mitochondrion. The catalysed reaction is N(6)-[(R)-S(8)-aminomethyldihydrolipoyl]-L-lysyl-[protein] + (6S)-5,6,7,8-tetrahydrofolate = N(6)-[(R)-dihydrolipoyl]-L-lysyl-[protein] + (6R)-5,10-methylene-5,6,7,8-tetrahydrofolate + NH4(+). The glycine cleavage system catalyzes the degradation of glycine. The sequence is that of Probable aminomethyltransferase, mitochondrial (gcv1) from Schizosaccharomyces pombe (strain 972 / ATCC 24843) (Fission yeast).